Here is a 262-residue protein sequence, read N- to C-terminus: Virulence plasmid protein pGP6-D-related protein (262 aa).

Belongs to the UPF0137 (pGP6-D) family.

The protein is Virulence plasmid protein pGP6-D-related protein of Chlamydia muridarum (strain MoPn / Nigg).